Consider the following 436-residue polypeptide: MGKLRVVHYINQFFAGIGGEEKADIAPFVAEELPPISQNLDKLLGEDAEVVATVVCGDSFFGENLETAQATVLEMVKGASPDLFIAGPAFNAGRYGVAAGAITKAVQDTLGIPAVTGMYIENPGADMYKKSVYVMSTADSAAGMRKSLPALAKFALKYAKGEEIGSPAEEGYIERGIRVNGFKEDRGAKRAVAMLVKKLKGEEFVTEYPMPVFDNVVPGRAIVNMSKAKIAIVTSGGIVPKGNPDRIESSSASKYGKYDIDGVDDLTSEGWETAHGGHDPVYANEDADRVIPVDVLRDMEKEGVIGELHRYFYSTTGNGTAVLSSKQFAKEFTQELMAAGVDAVILTSTUGTCTRCGATMVKEIERSGIPVVHICTVTPIALTVGANRIVPAIAIPHPLGDPALSPAEEKALRRKIVEKSLKALETEIEEQTVFED.

Sec350 is a catalytic residue. Sec350 is a non-standard amino acid (selenocysteine).

It belongs to the GrdB/GrdF/GrdH family. Heterohexamer of two alpha, two beta and two gamma subunits. Component of the glycine reductase complex, together with components A and C. PB is substrate specific.

It carries out the reaction acetyl phosphate + [thioredoxin]-disulfide + NH4(+) + H2O = [thioredoxin]-dithiol + glycine + phosphate + H(+). In the first step of glycine reductase, the substrate is bound to component PB via a Schiff base intermediate. Then the PB-activated substrate is nucleophilically attacked by the selenol anion of component PA to transform it to a carboxymethylated selenoether and the respective amine. By action of component PC, acetyl phosphate is formed, leaving component PA in its oxidized state. Finally component PA becomes reduced by the thioredoxin system to start a new catalytic cycle of reductive deamination. The chain is Glycine reductase complex component B subunit gamma (grdB) from Peptoclostridium litorale (Clostridium litorale).